The primary structure comprises 234 residues: UPF0173 metal-dependent hydrolase Smed_0942 (234 aa).

Belongs to the UPF0173 family.

The chain is UPF0173 metal-dependent hydrolase Smed_0942 from Sinorhizobium medicae (strain WSM419) (Ensifer medicae).